Consider the following 307-residue polypeptide: Aspartate carbamoyltransferase catalytic subunit (307 aa).

Residues Arg54 and Thr55 each contribute to the carbamoyl phosphate site. Lys83 is a binding site for L-aspartate. The carbamoyl phosphate site is built by Arg104, His132, and Gln135. L-aspartate is bound by residues Arg165 and Arg228. Residues Leu267 and Pro268 each coordinate carbamoyl phosphate.

The protein belongs to the aspartate/ornithine carbamoyltransferase superfamily. ATCase family. As to quaternary structure, heterododecamer (2C3:3R2) of six catalytic PyrB chains organized as two trimers (C3), and six regulatory PyrI chains organized as three dimers (R2).

It carries out the reaction carbamoyl phosphate + L-aspartate = N-carbamoyl-L-aspartate + phosphate + H(+). Its pathway is pyrimidine metabolism; UMP biosynthesis via de novo pathway; (S)-dihydroorotate from bicarbonate: step 2/3. Functionally, catalyzes the condensation of carbamoyl phosphate and aspartate to form carbamoyl aspartate and inorganic phosphate, the committed step in the de novo pyrimidine nucleotide biosynthesis pathway. The sequence is that of Aspartate carbamoyltransferase catalytic subunit from Clostridium botulinum (strain ATCC 19397 / Type A).